Consider the following 330-residue polypeptide: Succinoglycan biosynthesis protein ExoA (330 aa).

3 helical membrane passes run 116-136 (ALAT…FSTF), 260-280 (IAFG…VGVW), and 299-319 (YGPL…AGFW).

Belongs to the glycosyltransferase 2 family.

It localises to the cell membrane. It participates in glycan metabolism; exopolysaccharide biosynthesis. Its function is as follows. Glycosyltransferase required for the synthesis of succinoglycan (EPS I). Needed for the addition of the second sugar (glucose). Catalyzes the formation of a beta-1,3 linkage with the galactose lipid carrier. In Rhizobium meliloti (strain 1021) (Ensifer meliloti), this protein is Succinoglycan biosynthesis protein ExoA (exoA).